A 628-amino-acid polypeptide reads, in one-letter code: tRNA uridine 5-carboxymethylaminomethyl modification enzyme MnmG (628 aa).

Residues G14–G19, V126, and S181 each bind FAD. G273–F287 is an NAD(+) binding site. Q370 serves as a coordination point for FAD.

Belongs to the MnmG family. In terms of assembly, homodimer. Heterotetramer of two MnmE and two MnmG subunits. Requires FAD as cofactor.

It is found in the cytoplasm. Its function is as follows. NAD-binding protein involved in the addition of a carboxymethylaminomethyl (cmnm) group at the wobble position (U34) of certain tRNAs, forming tRNA-cmnm(5)s(2)U34. This Bacillus subtilis (strain 168) protein is tRNA uridine 5-carboxymethylaminomethyl modification enzyme MnmG.